The chain runs to 390 residues: Acetate kinase (390 aa).

N10 provides a ligand contact to Mg(2+). Residue K17 participates in ATP binding. R89 is a binding site for substrate. D146 functions as the Proton donor/acceptor in the catalytic mechanism. ATP contacts are provided by residues 204–208, 278–280, and 323–327; these read HLGNG, DMR, and GIGEN. Position 376 (E376) interacts with Mg(2+).

Belongs to the acetokinase family. Homodimer. Mg(2+) serves as cofactor. Requires Mn(2+) as cofactor.

It localises to the cytoplasm. The catalysed reaction is acetate + ATP = acetyl phosphate + ADP. It functions in the pathway metabolic intermediate biosynthesis; acetyl-CoA biosynthesis; acetyl-CoA from acetate: step 1/2. Functionally, catalyzes the formation of acetyl phosphate from acetate and ATP. Can also catalyze the reverse reaction. In Mycoplasma pneumoniae (strain ATCC 29342 / M129 / Subtype 1) (Mycoplasmoides pneumoniae), this protein is Acetate kinase.